The primary structure comprises 164 residues: 17.8 kDa heat shock protein (164 aa).

The sHSP domain maps to 20-154; sequence VVAGEARPPM…HAGNGKAAGD (135 aa). Positions 68–93 are disordered; that stretch reads GEHEDANNAAKAGKASGEEEEENDGV.

The protein belongs to the small heat shock protein (HSP20) family. May form oligomeric structures.

The protein resides in the cytoplasm. In Oryza sativa subsp. japonica (Rice), this protein is 17.8 kDa heat shock protein (HSP17.8).